Here is a 555-residue protein sequence, read N- to C-terminus: Formate--tetrahydrofolate ligase (555 aa).

ATP is bound at residue 64-71 (TKAGIGKT).

It belongs to the formate--tetrahydrofolate ligase family.

The enzyme catalyses (6S)-5,6,7,8-tetrahydrofolate + formate + ATP = (6R)-10-formyltetrahydrofolate + ADP + phosphate. It participates in one-carbon metabolism; tetrahydrofolate interconversion. This is Formate--tetrahydrofolate ligase from Bacteroides fragilis (strain ATCC 25285 / DSM 2151 / CCUG 4856 / JCM 11019 / LMG 10263 / NCTC 9343 / Onslow / VPI 2553 / EN-2).